A 125-amino-acid chain; its full sequence is Fluoride-specific ion channel FluC (125 aa).

A run of 4 helical transmembrane segments spans residues 9–29, 32–52, 67–87, and 99–119; these read LFCAGGGLTRYYLSGWIYGLL, AFPYGTLVVNIIGAYCIGLIM, IGLTVGFMGGLTTFSTFSYET, and AFTNVLASVAVCLLCTWLGII. Na(+)-binding residues include Gly-75 and Thr-78.

The protein belongs to the fluoride channel Fluc/FEX (TC 1.A.43) family.

The protein resides in the cell inner membrane. It carries out the reaction fluoride(in) = fluoride(out). With respect to regulation, na(+) is not transported, but it plays an essential structural role and its presence is essential for fluoride channel function. Fluoride-specific ion channel. Important for reducing fluoride concentration in the cell, thus reducing its toxicity. This Trichlorobacter lovleyi (strain ATCC BAA-1151 / DSM 17278 / SZ) (Geobacter lovleyi) protein is Fluoride-specific ion channel FluC.